A 199-amino-acid chain; its full sequence is Homeobox protein ceh-19 (199 aa).

The disordered stretch occupies residues 1–42 (MAFNIESLLEKKSNPVEEGNDFEEENDSEKNGEEDEEEEEKN). Positions 18-40 (EGNDFEEENDSEKNGEEDEEEEE) are enriched in acidic residues. The segment at residues 94 to 153 (ERKPRQAYSARQLDRLETEFQTDKYLSVNKRIQLSQTLNLTETQIKTWFQNRRTKWKKQL) is a DNA-binding region (homeobox).

It localises to the nucleus. Probable transcription factor. Required for MC motor neuron differentiation and function, including role in modulating pharyngeal pumping. Regulates gene expression of FMRFamide-like neuropeptide flp-2 in MC motor neurons. May act downstream of transcription factor pha-4. The polypeptide is Homeobox protein ceh-19 (ceh-19) (Caenorhabditis elegans).